A 37-amino-acid polypeptide reads, in one-letter code: Large ribosomal subunit protein bL36c (37 aa).

This sequence belongs to the bacterial ribosomal protein bL36 family.

It is found in the plastid. The protein resides in the chloroplast. This Angiopteris evecta (Mule's foot fern) protein is Large ribosomal subunit protein bL36c.